A 187-amino-acid chain; its full sequence is Elongation factor P (187 aa).

Belongs to the elongation factor P family.

It is found in the cytoplasm. The protein operates within protein biosynthesis; polypeptide chain elongation. Functionally, involved in peptide bond synthesis. Stimulates efficient translation and peptide-bond synthesis on native or reconstituted 70S ribosomes in vitro. Probably functions indirectly by altering the affinity of the ribosome for aminoacyl-tRNA, thus increasing their reactivity as acceptors for peptidyl transferase. The protein is Elongation factor P of Desulfotalea psychrophila (strain LSv54 / DSM 12343).